A 468-amino-acid polypeptide reads, in one-letter code: 6-phospho-beta-galactosidase (468 aa).

D-galactose 6-phosphate contacts are provided by Gln-19, His-116, Asn-159, Glu-160, and Asn-297. The active-site Proton donor is the Glu-160. Glu-375 serves as the catalytic Nucleophile. D-galactose 6-phosphate is bound by residues Ser-428, Trp-429, Lys-435, and Tyr-437.

It belongs to the glycosyl hydrolase 1 family.

It catalyses the reaction a 6-phospho-beta-D-galactoside + H2O = D-galactose 6-phosphate + an alcohol. Its pathway is carbohydrate metabolism; lactose degradation; D-galactose 6-phosphate and beta-D-glucose from lactose 6-phosphate: step 1/1. In Streptococcus pneumoniae (strain JJA), this protein is 6-phospho-beta-galactosidase.